The chain runs to 1342 residues: DNA-directed RNA polymerase subunit beta (1342 aa).

The protein belongs to the RNA polymerase beta chain family. As to quaternary structure, the RNAP catalytic core consists of 2 alpha, 1 beta, 1 beta' and 1 omega subunit. When a sigma factor is associated with the core the holoenzyme is formed, which can initiate transcription.

It carries out the reaction RNA(n) + a ribonucleoside 5'-triphosphate = RNA(n+1) + diphosphate. Its function is as follows. DNA-dependent RNA polymerase catalyzes the transcription of DNA into RNA using the four ribonucleoside triphosphates as substrates. The polypeptide is DNA-directed RNA polymerase subunit beta (Photorhabdus laumondii subsp. laumondii (strain DSM 15139 / CIP 105565 / TT01) (Photorhabdus luminescens subsp. laumondii)).